The following is a 556-amino-acid chain: Oxygen-dependent choline dehydrogenase (556 aa).

6 to 35 (DYIIIGAGSAGNVLAARLTEDPGVTVLLLE) is an FAD binding site. His475 (proton acceptor) is an active-site residue.

The protein belongs to the GMC oxidoreductase family. FAD is required as a cofactor.

The catalysed reaction is choline + A = betaine aldehyde + AH2. It catalyses the reaction betaine aldehyde + NAD(+) + H2O = glycine betaine + NADH + 2 H(+). It functions in the pathway amine and polyamine biosynthesis; betaine biosynthesis via choline pathway; betaine aldehyde from choline (cytochrome c reductase route): step 1/1. Its function is as follows. Involved in the biosynthesis of the osmoprotectant glycine betaine. Catalyzes the oxidation of choline to betaine aldehyde and betaine aldehyde to glycine betaine at the same rate. This chain is Oxygen-dependent choline dehydrogenase, found in Xanthomonas axonopodis pv. citri (strain 306).